The following is a 515-amino-acid chain: MDEFHRCGKEDSFWQQCFLYPLFFQEDLYAISHDHYLDVSSSSRPMEHLSSNDQLSFLTVKRLIGQIRQQNHSIVLFVNCDPNPLADRKKSFYSESVLEALTLVLEVPFSIWSKYSVEGMNESKSFRSIHSIFPFLEDKFPHSNSILDARIPYSIHPEILVRTFRRWIRDAPSLHPLRSVLYEYRNSPDNLQRSIIVVPRVNTRFFLFLWNYYVCECESILFSRLKRSSHSRSLTHGSFPQRTHFHRKIKHIIIFSRRNSLKSIWSLKDPKIHYVRYGERPIIAIKGAHLLVKKCRYYLLIFRQFYFHLWSEPYRVCSHQLSKNCSSSPGYFLRVRMNPILVRTKMLDELFIADLITDEIDPIVPIVPIIGLLATEKFCDISGRPISKLSWTSLTDDDILDRFDQIWRNLFHYYSGSFDRDGLYRIKYILSLSCAKTLACKHKSTIRVVRKELGPELFKKSFSKEREFYSLRFSSKAAARSQRERIWHSDISQINPLANSWQKIQDLKIENLFDQ.

This sequence belongs to the intron maturase 2 family. MatK subfamily.

It localises to the plastid. It is found in the chloroplast. Its function is as follows. Usually encoded in the trnK tRNA gene intron. Probably assists in splicing its own and other chloroplast group II introns. The sequence is that of Maturase K from Pinus patula (Mexican weeping pine).